A 436-amino-acid polypeptide reads, in one-letter code: Xylose isomerase (436 aa).

Active-site residues include histidine 100 and aspartate 103. Residues glutamate 231, glutamate 267, histidine 270, aspartate 295, aspartate 306, aspartate 308, and aspartate 338 each contribute to the Mg(2+) site.

This sequence belongs to the xylose isomerase family. Homotetramer. Mg(2+) serves as cofactor.

The protein localises to the cytoplasm. It catalyses the reaction alpha-D-xylose = alpha-D-xylulofuranose. The polypeptide is Xylose isomerase (Chelativorans sp. (strain BNC1)).